We begin with the raw amino-acid sequence, 449 residues long: Phosphoglucosamine mutase (449 aa).

Residue serine 101 is the Phosphoserine intermediate of the active site. Residues serine 101, aspartate 242, aspartate 244, and aspartate 246 each coordinate Mg(2+). Serine 101 bears the Phosphoserine mark.

Belongs to the phosphohexose mutase family. Mg(2+) serves as cofactor. Post-translationally, activated by phosphorylation.

The enzyme catalyses alpha-D-glucosamine 1-phosphate = D-glucosamine 6-phosphate. In terms of biological role, catalyzes the conversion of glucosamine-6-phosphate to glucosamine-1-phosphate. This Methylocella silvestris (strain DSM 15510 / CIP 108128 / LMG 27833 / NCIMB 13906 / BL2) protein is Phosphoglucosamine mutase.